The sequence spans 404 residues: ATP phosphoribosyltransferase regulatory subunit (404 aa).

It belongs to the class-II aminoacyl-tRNA synthetase family. HisZ subfamily. In terms of assembly, heteromultimer composed of HisG and HisZ subunits.

The protein resides in the cytoplasm. It participates in amino-acid biosynthesis; L-histidine biosynthesis; L-histidine from 5-phospho-alpha-D-ribose 1-diphosphate: step 1/9. Required for the first step of histidine biosynthesis. May allow the feedback regulation of ATP phosphoribosyltransferase activity by histidine. The polypeptide is ATP phosphoribosyltransferase regulatory subunit (Picosynechococcus sp. (strain ATCC 27264 / PCC 7002 / PR-6) (Agmenellum quadruplicatum)).